A 222-amino-acid chain; its full sequence is Cytochrome b6 (222 aa).

A helical membrane pass occupies residues 39–59 (IFYCLGGITLVCFLIQFATGF). A heme c-binding site is contributed by C42. Residues H93 and H107 each coordinate heme b. The next 3 membrane-spanning stretches (helical) occupy residues 97-117 (ASMM…TGGF), 123-143 (LTWV…VTGY), and 193-213 (LHTF…FLMI). Residues H194 and H209 each contribute to the heme b site.

It belongs to the cytochrome b family. PetB subfamily. As to quaternary structure, the 4 large subunits of the cytochrome b6-f complex are cytochrome b6, subunit IV (17 kDa polypeptide, PetD), cytochrome f and the Rieske protein, while the 4 small subunits are PetG, PetL, PetM and PetN. The complex functions as a dimer. Heme b is required as a cofactor. Requires heme c as cofactor.

The protein resides in the cellular thylakoid membrane. Its function is as follows. Component of the cytochrome b6-f complex, which mediates electron transfer between photosystem II (PSII) and photosystem I (PSI), cyclic electron flow around PSI, and state transitions. This Trichodesmium erythraeum (strain IMS101) protein is Cytochrome b6.